The sequence spans 416 residues: Coenzyme F420H(2) oxidase (416 aa).

Positions 87, 89, 91, 92, 155, 174, and 239 each coordinate Fe cation. Residues 266-407 (AVIVYDTMHY…NCYNMGKELA (142 aa)) form the Flavodoxin-like domain. Residues 272 to 277 (TMHYST), 324 to 327 (TIYD), and 359 to 364 (SMGGEG) contribute to the FMN site.

The protein in the N-terminal section; belongs to the zinc metallo-hydrolase group 3 family. FMN serves as cofactor. It depends on Fe cation as a cofactor.

It catalyses the reaction 2 reduced coenzyme F420-(gamma-L-Glu)(n) + O2 = 2 oxidized coenzyme F420-(gamma-L-Glu)(n) + 2 H2O + 2 H(+). Catalyzes the oxidation of F420H(2) with O(2). May be involved in O(2) detoxification, reducing the intracellular O(2) concentration to a level allowing growth at the expense of methane formation. This is Coenzyme F420H(2) oxidase (fprA) from Methanocaldococcus jannaschii (strain ATCC 43067 / DSM 2661 / JAL-1 / JCM 10045 / NBRC 100440) (Methanococcus jannaschii).